The sequence spans 158 residues: NAD(P)H-quinone oxidoreductase subunit J, chloroplastic (158 aa).

Belongs to the complex I 30 kDa subunit family. As to quaternary structure, NDH is composed of at least 16 different subunits, 5 of which are encoded in the nucleus.

It is found in the plastid. It localises to the chloroplast thylakoid membrane. The enzyme catalyses a plastoquinone + NADH + (n+1) H(+)(in) = a plastoquinol + NAD(+) + n H(+)(out). It carries out the reaction a plastoquinone + NADPH + (n+1) H(+)(in) = a plastoquinol + NADP(+) + n H(+)(out). Its function is as follows. NDH shuttles electrons from NAD(P)H:plastoquinone, via FMN and iron-sulfur (Fe-S) centers, to quinones in the photosynthetic chain and possibly in a chloroplast respiratory chain. The immediate electron acceptor for the enzyme in this species is believed to be plastoquinone. Couples the redox reaction to proton translocation, and thus conserves the redox energy in a proton gradient. In Coffea arabica (Arabian coffee), this protein is NAD(P)H-quinone oxidoreductase subunit J, chloroplastic.